The following is a 249-amino-acid chain: Methyltransferase 1 (249 aa).

The protein belongs to the FkbM methyltransferase family.

It participates in secondary metabolite biosynthesis. Methyltransferase; part of the pathway that mediates the biosynthesis of tenellin-type 2-pyridones, iron-chelating compounds involved in iron stress tolerance, competition with the natural competitor fungus Metarhizium robertsii and insect hosts infection. Methylates pyridovericin-N-O-(beta-D-glucopyranoside) produced by the UDP-glucosyltransferase GT1 to yield pyridovericin-N-O-(4-O-methyl-beta-D-glucopyranoside) (PMGP). The pathway begins with the assembly of the polyketide-amino acid backbone by the hybrid PKS-NRPS tenS with the help of the enoyl reductase tenC. These enzymes catalyze the synthesis of the pyrrolidine-2-dione intermediates pretellinin A, 11-hydropretellenin A, 12-hydropretellenin A, 13-hydropretellenin A, 14-hydropretellenin A, 12-oxopretellenin A and prototellinin D. The cytochrome P450 monooxygenase tenA then catalyzes an oxidative ring expansion of pretenellin A and 14-hydropretellenin A to form the 2-pyridone core, leading to pretenellin B and pyridovericin, respectively. The cytochrome P450 monooxygenase tenB is then required for the selective N-hydroxylation of the 2-pyridone nitrogen of yield tellinin and 15-hydroxytellenin (15-HT), respectively. The UDP-glucosyltransferase GT1 and the methyltransferase MT1, located outside the tenS gene cluster, contribute to the stepwise glycosylation and methylation of 15-HT to obtain the glycoside pyridovericin-N-O-(4-O-methyl-beta-D-glucopyranoside) (PMGP). Additional related compounds such as 1-O-methyl-15-HT, (8Z)-1-O-methyl-15-HT, and O-methyltenellin A are also produced but the enzymes involved in their biosynthesis have still to be determined. In Beauveria bassiana (strain ARSEF 2860) (White muscardine disease fungus), this protein is Methyltransferase 1.